Here is a 492-residue protein sequence, read N- to C-terminus: Bifunctional purine biosynthesis protein PurH (492 aa).

One can recognise an MGS-like domain in the interval 1–144 (MKKAILSVSN…KNYKHVTTIV (144 aa)).

This sequence belongs to the PurH family.

It carries out the reaction (6R)-10-formyltetrahydrofolate + 5-amino-1-(5-phospho-beta-D-ribosyl)imidazole-4-carboxamide = 5-formamido-1-(5-phospho-D-ribosyl)imidazole-4-carboxamide + (6S)-5,6,7,8-tetrahydrofolate. The catalysed reaction is IMP + H2O = 5-formamido-1-(5-phospho-D-ribosyl)imidazole-4-carboxamide. Its pathway is purine metabolism; IMP biosynthesis via de novo pathway; 5-formamido-1-(5-phospho-D-ribosyl)imidazole-4-carboxamide from 5-amino-1-(5-phospho-D-ribosyl)imidazole-4-carboxamide (10-formyl THF route): step 1/1. It functions in the pathway purine metabolism; IMP biosynthesis via de novo pathway; IMP from 5-formamido-1-(5-phospho-D-ribosyl)imidazole-4-carboxamide: step 1/1. The chain is Bifunctional purine biosynthesis protein PurH from Staphylococcus aureus (strain MRSA252).